Here is a 260-residue protein sequence, read N- to C-terminus: Snake venom serine protease salmobin (260 aa).

An N-terminal signal peptide occupies residues M1–A18. Positions Q19–L24 are excised as a propeptide. The region spanning V25–A251 is the Peptidase S1 domain. Disulfide bonds link C31–C165, C52–C68, C102–C258, C144–C212, C176–C191, and C202–C227. H67 functions as the Charge relay system in the catalytic mechanism. N105 carries N-linked (GlcNAc...) asparagine glycosylation. D112 acts as the Charge relay system in catalysis. N-linked (GlcNAc...) asparagine glycans are attached at residues N123 and N156. The Charge relay system role is filled by S206.

It belongs to the peptidase S1 family. Snake venom subfamily. In terms of assembly, monomer. Expressed by the venom gland.

It is found in the secreted. In terms of biological role, snake venom serine protease that may act in the hemostasis system of the prey. The sequence is that of Snake venom serine protease salmobin from Gloydius halys (Chinese water mocassin).